Reading from the N-terminus, the 450-residue chain is Phosphoglucosamine mutase 2 (450 aa).

S101 acts as the Phosphoserine intermediate in catalysis. Residues S101, D245, D247, and D249 each contribute to the Mg(2+) site. S101 bears the Phosphoserine mark.

The protein belongs to the phosphohexose mutase family. Requires Mg(2+) as cofactor. In terms of processing, activated by phosphorylation.

It catalyses the reaction alpha-D-glucosamine 1-phosphate = D-glucosamine 6-phosphate. Catalyzes the conversion of glucosamine-6-phosphate to glucosamine-1-phosphate. This chain is Phosphoglucosamine mutase 2, found in Shewanella frigidimarina (strain NCIMB 400).